Reading from the N-terminus, the 237-residue chain is Endonuclease NucS (237 aa).

It belongs to the NucS endonuclease family.

It localises to the cytoplasm. Functionally, cleaves both 3' and 5' ssDNA extremities of branched DNA structures. In Saccharolobus islandicus (strain L.S.2.15 / Lassen #1) (Sulfolobus islandicus), this protein is Endonuclease NucS.